The chain runs to 77 residues: U8-lycotoxin-Ls1l (77 aa).

An N-terminal signal peptide occupies residues 1-20 (MKLMIFTGLVLFAIVSLIEA). The propeptide occupies 21–26 (QAENEK).

Belongs to the neurotoxin 19 (CSTX) family. 08 (U8-Lctx) subfamily. Post-translationally, contains 4 disulfide bonds. Expressed by the venom gland.

It is found in the secreted. The polypeptide is U8-lycotoxin-Ls1l (Lycosa singoriensis (Wolf spider)).